Reading from the N-terminus, the 248-residue chain is 3-oxoacyl-[acyl-carrier-protein] reductase FabG (248 aa).

Residues 14–17 (GGSR), 65–66 (DV), and Asn-92 each bind NADP(+). A substrate-binding site is contributed by Ser-144. Catalysis depends on Tyr-157, which acts as the Proton acceptor. Residues 157 to 161 (YAAAK) and Ile-190 contribute to the NADP(+) site.

The protein belongs to the short-chain dehydrogenases/reductases (SDR) family. In terms of assembly, homotetramer.

It catalyses the reaction a (3R)-hydroxyacyl-[ACP] + NADP(+) = a 3-oxoacyl-[ACP] + NADPH + H(+). The protein operates within lipid metabolism; fatty acid biosynthesis. Catalyzes the NADPH-dependent reduction of beta-ketoacyl-ACP substrates to beta-hydroxyacyl-ACP products, the first reductive step in the elongation cycle of fatty acid biosynthesis. This is 3-oxoacyl-[acyl-carrier-protein] reductase FabG (fabG) from Chlamydia muridarum (strain MoPn / Nigg).